The primary structure comprises 520 residues: Sterile alpha motif domain-containing protein 3 (520 aa).

The SAM domain occupies 4-71 (WSVDQVCKWL…KYKQGNQELK (68 aa)). A disordered region spans residues 67–104 (NQELKPTGGPADTSTLTPAQAAPEHEQNPSPTSHGDQT). Residues 94–104 (NPSPTSHGDQT) are compositionally biased toward polar residues.

This chain is Sterile alpha motif domain-containing protein 3 (Samd3), found in Mus musculus (Mouse).